We begin with the raw amino-acid sequence, 330 residues long: DNA-directed RNA polymerase subunit alpha (330 aa).

The tract at residues Met-1–Ser-229 is alpha N-terminal domain (alpha-NTD). Positions Ala-245–His-330 are alpha C-terminal domain (alpha-CTD).

This sequence belongs to the RNA polymerase alpha chain family. In terms of assembly, homodimer. The RNAP catalytic core consists of 2 alpha, 1 beta, 1 beta' and 1 omega subunit. When a sigma factor is associated with the core the holoenzyme is formed, which can initiate transcription.

The enzyme catalyses RNA(n) + a ribonucleoside 5'-triphosphate = RNA(n+1) + diphosphate. DNA-dependent RNA polymerase catalyzes the transcription of DNA into RNA using the four ribonucleoside triphosphates as substrates. The chain is DNA-directed RNA polymerase subunit alpha from Aster yellows witches'-broom phytoplasma (strain AYWB).